Consider the following 260-residue polypeptide: MTEPAFFPETATSTAEPRLVVEPGVAARVAAIAEPVLEGLGYRLVRIKISGEAGCTVQIMAERPDGTMLIDDCEAVSKALSPVMDVADPIQRAYRLEISSPGIDRPLVRQSDFERYTGHLVKIEMAAPHEGRKRFRGTLQGIEDNLVRITRDDAKSHEGAQPADARLPLADIASAHLVLTDQLIAESMRRGRDAEREQLENAGVLPPPPPHAKKAREMRDKAGPRKEKTAKKPLPKNTKAHRLAADAKRRQTTSDPHQGE.

Composition is skewed to basic and acidic residues over residues 189–199 (RRGRDAEREQL) and 215–227 (AREM…PRKE). The interval 189–260 (RRGRDAEREQ…QTTSDPHQGE (72 aa)) is disordered. The segment covering 228 to 242 (KTAKKPLPKNTKAHR) has biased composition (basic residues).

It belongs to the RimP family.

The protein resides in the cytoplasm. Functionally, required for maturation of 30S ribosomal subunits. The polypeptide is Ribosome maturation factor RimP (Afipia carboxidovorans (strain ATCC 49405 / DSM 1227 / KCTC 32145 / OM5) (Oligotropha carboxidovorans)).